A 64-amino-acid chain; its full sequence is UPF0434 protein BAB2_0345 (64 aa).

The protein belongs to the UPF0434 family.

The chain is UPF0434 protein BAB2_0345 from Brucella abortus (strain 2308).